Reading from the N-terminus, the 116-residue chain is Large ribosomal subunit protein bL19 (116 aa).

This sequence belongs to the bacterial ribosomal protein bL19 family.

Functionally, this protein is located at the 30S-50S ribosomal subunit interface and may play a role in the structure and function of the aminoacyl-tRNA binding site. The sequence is that of Large ribosomal subunit protein bL19 from Lactobacillus gasseri (strain ATCC 33323 / DSM 20243 / BCRC 14619 / CIP 102991 / JCM 1131 / KCTC 3163 / NCIMB 11718 / NCTC 13722 / AM63).